Reading from the N-terminus, the 1714-residue chain is uncharacterized protein (1714 aa).

Disordered stretches follow at residues 47–70 (SVAG…SDDL) and 584–616 (KKTG…KSKK). ATP-binding positions include 607–614 (ATKESGKS) and 806–813 (APTSAGKT). Basic and acidic residues predominate over residues 607–616 (ATKESGKSKK). One can recognise a Helicase ATP-binding domain in the interval 793-963 (LDSVDRGNSA…WLNSSEQAKS (171 aa)). Positions 913–916 (DEVH) match the DEVH box motif. The segment at 1197–1223 (KRKRDDAEKKKKGDKDEDAGPEKDDDE) is disordered. Residues 1199–1218 (KRDDAEKKKKGDKDEDAGPE) are compositionally biased toward basic and acidic residues. The Helicase C-terminal domain occupies 1237–1391 (ALERFKLRGR…NPPFTVLFLL (155 aa)).

This sequence belongs to the helicase family. SKI2 subfamily.

The protein localises to the nucleus. This is an uncharacterized protein from Caenorhabditis elegans.